Reading from the N-terminus, the 354-residue chain is Methylthioribose-1-phosphate isomerase (354 aa).

Residues 58-60, Arg-101, and Gln-204 each bind substrate; that span reads RGA. The Proton donor role is filled by Asp-245. 255-256 lines the substrate pocket; it reads NK.

This sequence belongs to the eIF-2B alpha/beta/delta subunits family. MtnA subfamily.

It carries out the reaction 5-(methylsulfanyl)-alpha-D-ribose 1-phosphate = 5-(methylsulfanyl)-D-ribulose 1-phosphate. It functions in the pathway amino-acid biosynthesis; L-methionine biosynthesis via salvage pathway; L-methionine from S-methyl-5-thio-alpha-D-ribose 1-phosphate: step 1/6. In terms of biological role, catalyzes the interconversion of methylthioribose-1-phosphate (MTR-1-P) into methylthioribulose-1-phosphate (MTRu-1-P). The sequence is that of Methylthioribose-1-phosphate isomerase from Stenotrophomonas maltophilia (strain R551-3).